The chain runs to 79 residues: Exodeoxyribonuclease 7 small subunit (79 aa).

This sequence belongs to the XseB family. Heterooligomer composed of large and small subunits.

It localises to the cytoplasm. The enzyme catalyses Exonucleolytic cleavage in either 5'- to 3'- or 3'- to 5'-direction to yield nucleoside 5'-phosphates.. Its function is as follows. Bidirectionally degrades single-stranded DNA into large acid-insoluble oligonucleotides, which are then degraded further into small acid-soluble oligonucleotides. This Lactococcus lactis subsp. lactis (strain IL1403) (Streptococcus lactis) protein is Exodeoxyribonuclease 7 small subunit.